A 466-amino-acid chain; its full sequence is Asparagine--tRNA ligase (466 aa).

Belongs to the class-II aminoacyl-tRNA synthetase family. Homodimer.

Its subcellular location is the cytoplasm. It carries out the reaction tRNA(Asn) + L-asparagine + ATP = L-asparaginyl-tRNA(Asn) + AMP + diphosphate + H(+). The chain is Asparagine--tRNA ligase from Shewanella loihica (strain ATCC BAA-1088 / PV-4).